The chain runs to 651 residues: Sodium/potassium/calcium exchanger 2 (651 aa).

At 1–38 the chain is on the cytoplasmic side; sequence MALCKKTVGSVLEEWCLNEPLFGCKRHQNVRKKLRLIR. Residues 39 to 59 traverse the membrane as a helical segment; it reads IIGLLVSVVAISTFSLSISAF. Topologically, residues 60 to 134 are extracellular; that stretch reads FKMETHSTVL…DLFSLEERRK (75 aa). The tract at residues 92–123 is disordered; it reads QNEGSTPDSPTSMKHEAEHDNATEEHSKGEYP. Residues 93–103 show a composition bias toward polar residues; the sequence is NEGSTPDSPTS. A compositionally biased stretch (basic and acidic residues) spans 104–122; it reads MKHEAEHDNATEEHSKGEY. The N-linked (GlcNAc...) asparagine glycan is linked to N112. A helical transmembrane segment spans residues 135-155; sequence GAVILHVIGMIYMFIALAIVC. Over 156-179 the chain is Cytoplasmic; sequence DEFFVPSLTVITEKLSISDDVAGA. One copy of the Alpha-1 repeat lies at 176–216; that stretch reads VAGATFMAAGGSAPELFTSLIGVFISHSNVGIGTIVGSAVF. The helical transmembrane segment at 180–200 threads the bilayer; it reads TFMAAGGSAPELFTSLIGVFI. The Extracellular segment spans residues 201 to 206; it reads SHSNVG. The chain crosses the membrane as a helical span at residues 207-227; it reads IGTIVGSAVFNILFVIGMCAL. The Cytoplasmic segment spans residues 228–245; it reads FSREILNLTWWPLFRDVS. Residues 246–266 form a helical membrane-spanning segment; it reads FYIVDLILLIIFFLDNLIMWW. At 267 to 459 the chain is on the extracellular side; it reads ESLTLLTAYF…SLAWPDTPRK (193 aa). The span at 304–322 shows a compositional bias: basic and acidic residues; the sequence is ATTGDAEGKSPTAGDKDDQ. Positions 304 to 338 are disordered; sequence ATTGDAEGKSPTAGDKDDQTLTTKPRLQRGGSSAS. Residues 323-338 show a composition bias toward polar residues; the sequence is TLTTKPRLQRGGSSAS. Residues 460–480 traverse the membrane as a helical segment; the sequence is QLTYLLVLPIVFPLWVSLPDV. The Cytoplasmic portion of the chain corresponds to 481–487; the sequence is RNPRSRK. Residues 488 to 508 traverse the membrane as a helical segment; that stretch reads FFPITFFGSISWIAFFSYLMV. Topologically, residues 509–523 are extracellular; that stretch reads WWAHQVGETIGISEE. The chain crosses the membrane as a helical span at residues 524 to 544; that stretch reads IMGLTILAAGTSIPDLITSVI. One copy of the Alpha-2 repeat lies at 531–562; the sequence is AAGTSIPDLITSVIVARKGLGDMAVSSSVGSN. Over 545-562 the chain is Cytoplasmic; sequence VARKGLGDMAVSSSVGSN. The chain crosses the membrane as a helical span at residues 563-583; that stretch reads IFDITVGLPLPWLLYAVINNF. Residues 584 to 592 lie on the Extracellular side of the membrane; sequence SPVTVSSNG. The helical transmembrane segment at 593–613 threads the bilayer; sequence LFCAIVLLFIMLLFVILSIAF. Over 614–620 the chain is Cytoplasmic; that stretch reads CKWRMNK. A helical transmembrane segment spans residues 621 to 641; that stretch reads FLGFLMFGLYFVFLIVSVLLE. At 642 to 651 the chain is on the extracellular side; the sequence is DKVIQCPVSI.

Belongs to the Ca(2+):cation antiporter (CaCA) (TC 2.A.19) family. SLC24A subfamily. In terms of tissue distribution, retinal cones. Found in the cone inner segment layer and in a subpopulation of ganglion cells.

Its subcellular location is the cell membrane. The catalysed reaction is Ca(2+)(out) + K(+)(out) + 4 Na(+)(in) = Ca(2+)(in) + K(+)(in) + 4 Na(+)(out). In terms of biological role, calcium, potassium:sodium antiporter that transports 1 Ca(2+) and 1 K(+) in exchange for 4 Na(+). Required for learming and memory by regulating neuronal Ca(2+), which is essential for the development of synaptic plasticity. The sequence is that of Sodium/potassium/calcium exchanger 2 (SLC24A2) from Gallus gallus (Chicken).